A 110-amino-acid polypeptide reads, in one-letter code: U1-lycotoxin-Ls1mm (110 aa).

Residues M1–A20 form the signal peptide. Residues E21–R44 constitute a propeptide that is removed on maturation. Cystine bridges form between C47-C62, C54-C71, C61-C89, and C73-C87.

This sequence belongs to the neurotoxin 19 (CSTX) family. 03 subfamily. Expressed by the venom gland.

The protein localises to the secreted. The sequence is that of U1-lycotoxin-Ls1mm from Lycosa singoriensis (Wolf spider).